We begin with the raw amino-acid sequence, 680 residues long: DNA-directed RNA polymerase subunit beta' (680 aa).

Zn(2+) contacts are provided by Cys69, Cys71, Cys87, and Cys90. Asp489, Asp491, and Asp493 together coordinate Mg(2+).

The protein belongs to the RNA polymerase beta' chain family. RpoC1 subfamily. As to quaternary structure, in plastids the minimal PEP RNA polymerase catalytic core is composed of four subunits: alpha, beta, beta', and beta''. When a (nuclear-encoded) sigma factor is associated with the core the holoenzyme is formed, which can initiate transcription. The cofactor is Mg(2+). Requires Zn(2+) as cofactor.

The protein localises to the plastid. It is found in the chloroplast. The enzyme catalyses RNA(n) + a ribonucleoside 5'-triphosphate = RNA(n+1) + diphosphate. In terms of biological role, DNA-dependent RNA polymerase catalyzes the transcription of DNA into RNA using the four ribonucleoside triphosphates as substrates. The chain is DNA-directed RNA polymerase subunit beta' from Arabis hirsuta (Hairy rock-cress).